The chain runs to 424 residues: Adenylosuccinate synthetase (424 aa).

GTP-binding positions include 12–18 and 40–42; these read GDEGKGK and GHT. D13 acts as the Proton acceptor in catalysis. D13 and G40 together coordinate Mg(2+). IMP is bound by residues 13–16, 38–41, T130, R144, N220, T235, and R299; these read DEGK and NAGH. Residue H41 is the Proton donor of the active site. 295–301 contributes to the substrate binding site; it reads VTTGRRR. Residues R301, 327–329, and 412–414 contribute to the GTP site; these read KLD and GTG.

It belongs to the adenylosuccinate synthetase family. Homodimer. Requires Mg(2+) as cofactor.

Its subcellular location is the cytoplasm. The catalysed reaction is IMP + L-aspartate + GTP = N(6)-(1,2-dicarboxyethyl)-AMP + GDP + phosphate + 2 H(+). The protein operates within purine metabolism; AMP biosynthesis via de novo pathway; AMP from IMP: step 1/2. Its function is as follows. Plays an important role in the de novo pathway and in the salvage pathway of purine nucleotide biosynthesis. Catalyzes the first committed step in the biosynthesis of AMP from IMP. The sequence is that of Adenylosuccinate synthetase from Aspergillus niger (strain ATCC MYA-4892 / CBS 513.88 / FGSC A1513).